A 244-amino-acid chain; its full sequence is NAD(P)H-quinone oxidoreductase subunit K (244 aa).

[4Fe-4S] cluster-binding residues include cysteine 60, cysteine 61, cysteine 125, and cysteine 156.

It belongs to the complex I 20 kDa subunit family. In terms of assembly, NDH-1 can be composed of about 15 different subunits; different subcomplexes with different compositions have been identified which probably have different functions. [4Fe-4S] cluster serves as cofactor.

It is found in the cellular thylakoid membrane. The enzyme catalyses a plastoquinone + NADH + (n+1) H(+)(in) = a plastoquinol + NAD(+) + n H(+)(out). It carries out the reaction a plastoquinone + NADPH + (n+1) H(+)(in) = a plastoquinol + NADP(+) + n H(+)(out). NDH-1 shuttles electrons from an unknown electron donor, via FMN and iron-sulfur (Fe-S) centers, to quinones in the respiratory and/or the photosynthetic chain. The immediate electron acceptor for the enzyme in this species is believed to be plastoquinone. Couples the redox reaction to proton translocation, and thus conserves the redox energy in a proton gradient. Cyanobacterial NDH-1 also plays a role in inorganic carbon-concentration. In Synechococcus sp. (strain CC9902), this protein is NAD(P)H-quinone oxidoreductase subunit K.